The sequence spans 430 residues: Histidine--tRNA ligase (430 aa).

This sequence belongs to the class-II aminoacyl-tRNA synthetase family. In terms of assembly, homodimer.

The protein localises to the cytoplasm. The catalysed reaction is tRNA(His) + L-histidine + ATP = L-histidyl-tRNA(His) + AMP + diphosphate + H(+). This is Histidine--tRNA ligase from Chlamydia abortus (strain DSM 27085 / S26/3) (Chlamydophila abortus).